Reading from the N-terminus, the 62-residue chain is Weak neurotoxin 5 (62 aa).

5 disulfide bridges follow: Cys-3–Cys-24, Cys-6–Cys-11, Cys-17–Cys-40, Cys-44–Cys-54, and Cys-55–Cys-60.

Belongs to the three-finger toxin family. Ancestral subfamily. Orphan group II sub-subfamily. As to expression, expressed by the venom gland.

Its subcellular location is the secreted. In terms of biological role, binds with low affinity to muscular (alpha-1-beta-1-delta-epsilon/CHRNA1-CHRNB1-CHRND-CHRNE) and very low affinity to neuronal (alpha-7/CHRNA7) nicotinic acetylcholine receptor (nAChR). The protein is Weak neurotoxin 5 of Naja naja (Indian cobra).